Reading from the N-terminus, the 333-residue chain is Homeobox protein engrailed-1 (333 aa).

Over residues 1-14 the composition is skewed to basic and acidic residues; it reads MEEPPEGHGHHRDA. 2 disordered regions span residues 1-184 and 226-247; these read MEEP…AAKY and RPSS…DKRP. Residues 20–31 are compositionally biased toward gly residues; the sequence is ANGGGGGGGGSD. The segment covering 38 to 66 has biased composition (pro residues); it reads SPSPAPASPAAPCPLPLPRRRPPPPPPPR. Gly residues predominate over residues 94-104; that stretch reads TGAGGGGGGGG. Residues 144–173 are compositionally biased toward low complexity; that stretch reads DGSAPAGTAAKANPGTAAGAAGAAGAAKAQ. A DNA-binding region (homeobox) is located at residues 244-303; that stretch reads DKRPRTAFTAEQLQRLKAEFQANRYITEQRRQSLAQELSLNESRVKIWFQNKRAKIKKAT.

The protein belongs to the engrailed homeobox family.

The protein localises to the nucleus. Required for proper formation of the apical ectodermal ridge and correct dorsal-ventral patterning in the limb. The sequence is that of Homeobox protein engrailed-1 (EN1) from Gallus gallus (Chicken).